A 555-amino-acid chain; its full sequence is Oxygen-dependent choline dehydrogenase (555 aa).

Position 4-33 (4-33) interacts with FAD; sequence DYIIIGAGSAGNVLATRLTEDADVSVLLLE. The segment at 180 to 202 is disordered; it reads QQEGFGPMDRTVTPKGRRASTAR. His473 functions as the Proton acceptor in the catalytic mechanism.

Belongs to the GMC oxidoreductase family. The cofactor is FAD.

It carries out the reaction choline + A = betaine aldehyde + AH2. The catalysed reaction is betaine aldehyde + NAD(+) + H2O = glycine betaine + NADH + 2 H(+). It functions in the pathway amine and polyamine biosynthesis; betaine biosynthesis via choline pathway; betaine aldehyde from choline (cytochrome c reductase route): step 1/1. In terms of biological role, involved in the biosynthesis of the osmoprotectant glycine betaine. Catalyzes the oxidation of choline to betaine aldehyde and betaine aldehyde to glycine betaine at the same rate. In Serratia proteamaculans (strain 568), this protein is Oxygen-dependent choline dehydrogenase.